Here is a 372-residue protein sequence, read N- to C-terminus: Integral membrane protein GPR137B (372 aa).

Topologically, residues 1–32 (MESPAWDATKNDSLPPTLTPAVPPYVKLGLTT) are lumenal. A glycan (N-linked (GlcNAc...) asparagine) is linked at Asn11. A helical membrane pass occupies residues 33-53 (VYTIFYLLLFAFVYVQLWLVL). Over 54-64 (HYKHKRFSYQT) the chain is Cytoplasmic. Residues 65–85 (VFLFLCLLWASLRAVLFSFYF) form a helical membrane-spanning segment. At 86–93 (RNFVEANR) the chain is on the lumenal side. A helical transmembrane segment spans residues 94–114 (LGAFTFWLLYCFPVCLQFFTL). Topologically, residues 115–144 (TLMNLYFARVIYKAKSKYLPELIKYRLPLY) are cytoplasmic. A helical membrane pass occupies residues 145 to 165 (LAFLVISLLFLVVNLTCAILV). At 166–173 (KTDYAETK) the chain is on the lumenal side. Residues 174–194 (VIVSIRVAINDTLFVLCAVSL) traverse the membrane as a helical segment. Residues 195–222 (SVCLYKISKMSLAGVYLESKGSSVCQVT) are Cytoplasmic-facing. The chain crosses the membrane as a helical span at residues 223–243 (CIGVTVILLYTSRACYNLVVL). Over 244 to 276 (SLSDSRYSSFDYDWYNVSDQADLKCKLGDAGYV) the chain is Lumenal. A glycan (N-linked (GlcNAc...) asparagine) is linked at Asn259. A helical transmembrane segment spans residues 277–297 (VFGIILFIWELFPTSLVVYFF). The Cytoplasmic segment spans residues 298–372 (RVRNSAQDMT…QTGSLQRDST (75 aa)).

It belongs to the GPR137 family.

The protein resides in the lysosome membrane. Lysosomal integral membrane protein that regulates the localization and activity of mTORC1, a signaling complex promoting cell growth in response to growth factors, energy levels, and amino acids. Interacts with Rag GTPases and increases the lysosomial localization and activity of Rag GTPases and thereby regulates mTORC1 translocation and activity in lysosome. Involved in the regulation of lysosomal morphology and autophagy. Also acts as a negative regulator of osteoclast activity. In terms of biological role, also acts as a negative regulator of osteoclast activity. The protein is Integral membrane protein GPR137B (gpr137b) of Xenopus laevis (African clawed frog).